Consider the following 293-residue polypeptide: Methylsterol monooxygenase 1 (293 aa).

2 helical membrane-spanning segments follow: residues 55–75 (LIVH…FQFI) and 100–120 (GILF…YYFT). Residues 144 to 274 (GCAVIEDTWH…FTWWDRIFGT (131 aa)) form the Fatty acid hydroxylase domain. Positions 157–161 (HRLLH) match the Histidine box-1 motif. The Histidine box-2 signature appears at 170-174 (HKVHH). Residues 199-219 (FFIGIVLLCDHVILLWAWVTM) traverse the membrane as a helical segment. Residues 249–255 (HHDFHHM) carry the Histidine box-3 motif.

It belongs to the sterol desaturase family. Requires Fe cation as cofactor. Ubiquitinated by MARCHF6, leading to proteasomal degradation.

It localises to the endoplasmic reticulum membrane. The enzyme catalyses 4,4-dimethyl-5alpha-cholest-7-en-3beta-ol + 6 Fe(II)-[cytochrome b5] + 3 O2 + 5 H(+) = 4alpha-carboxy-4beta-methyl-5alpha-cholest-7-ene-3beta-ol + 6 Fe(III)-[cytochrome b5] + 4 H2O. It carries out the reaction 4,4-dimethyl-5alpha-cholesta-8,24-dien-3beta-ol + 6 Fe(II)-[cytochrome b5] + 3 O2 + 5 H(+) = 4beta-methylzymosterol-4alpha-carboxylate + 6 Fe(III)-[cytochrome b5] + 4 H2O. It catalyses the reaction 4alpha-methylzymosterol + 6 Fe(II)-[cytochrome b5] + 3 O2 + 5 H(+) = 4alpha-carboxyzymosterol + 6 Fe(III)-[cytochrome b5] + 4 H2O. The catalysed reaction is 4alpha-methyl-5alpha-cholest-7-en-3beta-ol + 6 Fe(II)-[cytochrome b5] + 3 O2 + 5 H(+) = 4alpha-carboxy-5alpha-cholest-7-en-3beta-ol + 6 Fe(III)-[cytochrome b5] + 4 H2O. The enzyme catalyses 4,4-dimethyl-5alpha-cholest-8-en-3beta-ol + 6 Fe(II)-[cytochrome b5] + 3 O2 + 5 H(+) = 4alpha-carboxy-4beta-methyl-5alpha-cholest-8-en-3beta-ol + 6 Fe(III)-[cytochrome b5] + 4 H2O. It carries out the reaction 4alpha-methyl-5alpha-cholest-8-en-3beta-ol + 6 Fe(II)-[cytochrome b5] + 3 O2 + 5 H(+) = 4alpha-carboxy-5alpha-cholest-8-ene-3beta-ol + 6 Fe(III)-[cytochrome b5] + 4 H2O. Its pathway is steroid biosynthesis; zymosterol biosynthesis; zymosterol from lanosterol: step 3/6. The protein operates within steroid biosynthesis; cholesterol biosynthesis. Catalyzes the three-step monooxygenation required for the demethylation of 4,4-dimethyl and 4alpha-methylsterols, which can be subsequently metabolized to cholesterol. The chain is Methylsterol monooxygenase 1 (Msmo1) from Rattus norvegicus (Rat).